We begin with the raw amino-acid sequence, 379 residues long: MDNLANQGVIVLAAGGTGGHLFPAEALAHELRARGWDVHLATDARAQRFVGAFAQDHVHVIRSATIAGRNPVALLKTFWSLWQGNLDSRKLFRRLKPKLVVGFGGYPTLPPLYAASNMGIPTLIHEQNAVMGRANKGLAGRVKAIAGGFLPENSGAYAAKTVITGNPVRSPVLVAAATPYTPAGKDDRFRLLVFGGSQGAQFFSQAIPAAVALLPEHERARLLITQQARKEDEASARQAYEKLGVPADVAPFFNDMPARMADAHFVIARSGASTVSEITVIGRPAMLVPFPHALDHDQAANAAALAAAGGAEVVRQADLSPQRLAEMLQSAMNELERLEQQAKAAKSVGKPDAARLLADLAEAIASGKTVQEFKEGNRP.

Residues 17 to 19 (TGG), Asn128, Arg169, Ser197, and Gln298 contribute to the UDP-N-acetyl-alpha-D-glucosamine site.

This sequence belongs to the glycosyltransferase 28 family. MurG subfamily.

Its subcellular location is the cell inner membrane. The catalysed reaction is di-trans,octa-cis-undecaprenyl diphospho-N-acetyl-alpha-D-muramoyl-L-alanyl-D-glutamyl-meso-2,6-diaminopimeloyl-D-alanyl-D-alanine + UDP-N-acetyl-alpha-D-glucosamine = di-trans,octa-cis-undecaprenyl diphospho-[N-acetyl-alpha-D-glucosaminyl-(1-&gt;4)]-N-acetyl-alpha-D-muramoyl-L-alanyl-D-glutamyl-meso-2,6-diaminopimeloyl-D-alanyl-D-alanine + UDP + H(+). It functions in the pathway cell wall biogenesis; peptidoglycan biosynthesis. In terms of biological role, cell wall formation. Catalyzes the transfer of a GlcNAc subunit on undecaprenyl-pyrophosphoryl-MurNAc-pentapeptide (lipid intermediate I) to form undecaprenyl-pyrophosphoryl-MurNAc-(pentapeptide)GlcNAc (lipid intermediate II). The chain is UDP-N-acetylglucosamine--N-acetylmuramyl-(pentapeptide) pyrophosphoryl-undecaprenol N-acetylglucosamine transferase from Brucella melitensis biotype 2 (strain ATCC 23457).